Reading from the N-terminus, the 122-residue chain is Large ribosomal subunit protein uL14 (122 aa).

Belongs to the universal ribosomal protein uL14 family. In terms of assembly, part of the 50S ribosomal subunit. Forms a cluster with proteins L3 and L19. In the 70S ribosome, L14 and L19 interact and together make contacts with the 16S rRNA in bridges B5 and B8.

Functionally, binds to 23S rRNA. Forms part of two intersubunit bridges in the 70S ribosome. The protein is Large ribosomal subunit protein uL14 of Marinomonas sp. (strain MWYL1).